Here is a 401-residue protein sequence, read N- to C-terminus: Enolase (401 aa).

Glutamine 154 is a binding site for (2R)-2-phosphoglycerate. The Proton donor role is filled by glutamate 196. 3 residues coordinate Mg(2+): aspartate 232, glutamate 275, and aspartate 302. 4 residues coordinate (2R)-2-phosphoglycerate: lysine 327, arginine 356, serine 357, and lysine 378. The Proton acceptor role is filled by lysine 327.

The protein belongs to the enolase family. Requires Mg(2+) as cofactor.

The protein resides in the cytoplasm. The protein localises to the secreted. Its subcellular location is the cell surface. It catalyses the reaction (2R)-2-phosphoglycerate = phosphoenolpyruvate + H2O. It participates in carbohydrate degradation; glycolysis; pyruvate from D-glyceraldehyde 3-phosphate: step 4/5. Catalyzes the reversible conversion of 2-phosphoglycerate (2-PG) into phosphoenolpyruvate (PEP). It is essential for the degradation of carbohydrates via glycolysis. The chain is Enolase from Haloarcula marismortui (strain ATCC 43049 / DSM 3752 / JCM 8966 / VKM B-1809) (Halobacterium marismortui).